The primary structure comprises 299 residues: Protease HtpX homolog (299 aa).

The next 2 membrane-spanning stretches (helical) occupy residues glycine 7–isoleucine 24 and glycine 29–tryptophan 46. Zn(2+) is bound at residue histidine 130. Glutamate 131 is an active-site residue. Histidine 134 lines the Zn(2+) pocket. 2 consecutive transmembrane segments (helical) span residues valine 145–glycine 165 and proline 174–valine 194. Residue glutamate 203 participates in Zn(2+) binding.

Belongs to the peptidase M48B family. Zn(2+) serves as cofactor.

It is found in the cell inner membrane. This is Protease HtpX homolog from Cereibacter sphaeroides (strain ATCC 17025 / ATH 2.4.3) (Rhodobacter sphaeroides).